The sequence spans 109 residues: Large ribosomal subunit protein uL24 (109 aa).

The protein belongs to the universal ribosomal protein uL24 family. In terms of assembly, part of the 50S ribosomal subunit.

Its function is as follows. One of two assembly initiator proteins, it binds directly to the 5'-end of the 23S rRNA, where it nucleates assembly of the 50S subunit. Functionally, one of the proteins that surrounds the polypeptide exit tunnel on the outside of the subunit. In Mesoplasma florum (strain ATCC 33453 / NBRC 100688 / NCTC 11704 / L1) (Acholeplasma florum), this protein is Large ribosomal subunit protein uL24.